The sequence spans 386 residues: PqqA peptide cyclase (386 aa).

The region spanning 9 to 228 (SKPPLWLLAE…RQYIDQHHLK (220 aa)) is the Radical SAM core domain. Residues Cys23, Cys27, and Cys30 each coordinate [4Fe-4S] cluster.

Belongs to the radical SAM superfamily. PqqE family. Interacts with PqqD. The interaction is necessary for activity of PqqE. [4Fe-4S] cluster is required as a cofactor.

The enzyme catalyses [PQQ precursor protein] + S-adenosyl-L-methionine = E-Y cross-linked-[PQQ precursor protein] + 5'-deoxyadenosine + L-methionine + H(+). It participates in cofactor biosynthesis; pyrroloquinoline quinone biosynthesis. Catalyzes the cross-linking of a glutamate residue and a tyrosine residue in the PqqA protein as part of the biosynthesis of pyrroloquinoline quinone (PQQ). This is PqqA peptide cyclase from Acinetobacter baylyi (strain ATCC 33305 / BD413 / ADP1).